The sequence spans 292 residues: tRNA (guanine-N(1)-)-methyltransferase (292 aa).

S-adenosyl-L-methionine is bound by residues G151 and 175 to 180 (IGDYVL).

The protein belongs to the RNA methyltransferase TrmD family. Homodimer.

The protein resides in the cytoplasm. It carries out the reaction guanosine(37) in tRNA + S-adenosyl-L-methionine = N(1)-methylguanosine(37) in tRNA + S-adenosyl-L-homocysteine + H(+). In terms of biological role, specifically methylates guanosine-37 in various tRNAs. The sequence is that of tRNA (guanine-N(1)-)-methyltransferase from Corynebacterium diphtheriae (strain ATCC 700971 / NCTC 13129 / Biotype gravis).